Consider the following 229-residue polypeptide: Cytochrome c oxidase subunit 2 (229 aa).

At 1-26 the chain is on the mitochondrial intermembrane side; sequence MANWTQLGLQDASSPLMEELIYFHDY. A helical membrane pass occupies residues 27-48; it reads TLIILTLITILVFYGLASLIVS. Residues 49–62 lie on the Mitochondrial matrix side of the membrane; the sequence is SNTNRFFLEGQSLE. Residues 63-82 form a helical membrane-spanning segment; the sequence is TIWTVIPAVILIFIALPSLQ. Residues 83–229 lie on the Mitochondrial intermembrane side of the membrane; it reads LLYLIDEVNN…ENWVSNFLNE (147 aa). Cu cation-binding residues include histidine 161, cysteine 196, glutamate 198, cysteine 200, histidine 204, and methionine 207. Residue glutamate 198 participates in Mg(2+) binding.

The protein belongs to the cytochrome c oxidase subunit 2 family. As to quaternary structure, component of the cytochrome c oxidase (complex IV, CIV), a multisubunit enzyme composed of a catalytic core of 3 subunits and several supernumerary subunits. The complex exists as a monomer or a dimer and forms supercomplexes (SCs) in the inner mitochondrial membrane with ubiquinol-cytochrome c oxidoreductase (cytochrome b-c1 complex, complex III, CIII). Requires Cu cation as cofactor.

It is found in the mitochondrion inner membrane. The catalysed reaction is 4 Fe(II)-[cytochrome c] + O2 + 8 H(+)(in) = 4 Fe(III)-[cytochrome c] + 2 H2O + 4 H(+)(out). Functionally, component of the cytochrome c oxidase, the last enzyme in the mitochondrial electron transport chain which drives oxidative phosphorylation. The respiratory chain contains 3 multisubunit complexes succinate dehydrogenase (complex II, CII), ubiquinol-cytochrome c oxidoreductase (cytochrome b-c1 complex, complex III, CIII) and cytochrome c oxidase (complex IV, CIV), that cooperate to transfer electrons derived from NADH and succinate to molecular oxygen, creating an electrochemical gradient over the inner membrane that drives transmembrane transport and the ATP synthase. Cytochrome c oxidase is the component of the respiratory chain that catalyzes the reduction of oxygen to water. Electrons originating from reduced cytochrome c in the intermembrane space (IMS) are transferred via the dinuclear copper A center (CU(A)) of subunit 2 and heme A of subunit 1 to the active site in subunit 1, a binuclear center (BNC) formed by heme A3 and copper B (CU(B)). The BNC reduces molecular oxygen to 2 water molecules using 4 electrons from cytochrome c in the IMS and 4 protons from the mitochondrial matrix. The chain is Cytochrome c oxidase subunit 2 (COII) from Pisaster ochraceus (Ochre sea star).